The following is a 391-amino-acid chain: ATP phosphoribosyltransferase regulatory subunit (391 aa).

It belongs to the class-II aminoacyl-tRNA synthetase family. HisZ subfamily. Heteromultimer composed of HisG and HisZ subunits.

The protein resides in the cytoplasm. Its pathway is amino-acid biosynthesis; L-histidine biosynthesis; L-histidine from 5-phospho-alpha-D-ribose 1-diphosphate: step 1/9. Required for the first step of histidine biosynthesis. May allow the feedback regulation of ATP phosphoribosyltransferase activity by histidine. The polypeptide is ATP phosphoribosyltransferase regulatory subunit (Prochlorococcus marinus (strain SARG / CCMP1375 / SS120)).